Reading from the N-terminus, the 892-residue chain is Alanine--tRNA ligase (892 aa).

Residues His-596, His-600, Cys-700, and His-704 each contribute to the Zn(2+) site.

The protein belongs to the class-II aminoacyl-tRNA synthetase family. Zn(2+) is required as a cofactor.

It localises to the cytoplasm. It catalyses the reaction tRNA(Ala) + L-alanine + ATP = L-alanyl-tRNA(Ala) + AMP + diphosphate. Catalyzes the attachment of alanine to tRNA(Ala) in a two-step reaction: alanine is first activated by ATP to form Ala-AMP and then transferred to the acceptor end of tRNA(Ala). Also edits incorrectly charged Ser-tRNA(Ala) and Gly-tRNA(Ala) via its editing domain. The chain is Alanine--tRNA ligase from Methanococcus maripaludis (strain C6 / ATCC BAA-1332).